The chain runs to 202 residues: Nucleoside triphosphate pyrophosphatase (202 aa).

Catalysis depends on aspartate 79, which acts as the Proton acceptor.

It belongs to the Maf family. It depends on a divalent metal cation as a cofactor.

Its subcellular location is the cytoplasm. The enzyme catalyses a ribonucleoside 5'-triphosphate + H2O = a ribonucleoside 5'-phosphate + diphosphate + H(+). The catalysed reaction is a 2'-deoxyribonucleoside 5'-triphosphate + H2O = a 2'-deoxyribonucleoside 5'-phosphate + diphosphate + H(+). Its function is as follows. Nucleoside triphosphate pyrophosphatase. May have a dual role in cell division arrest and in preventing the incorporation of modified nucleotides into cellular nucleic acids. The sequence is that of Nucleoside triphosphate pyrophosphatase from Nitrobacter winogradskyi (strain ATCC 25391 / DSM 10237 / CIP 104748 / NCIMB 11846 / Nb-255).